Consider the following 174-residue polypeptide: Adenine phosphoribosyltransferase (174 aa).

The protein belongs to the purine/pyrimidine phosphoribosyltransferase family. Homodimer.

It is found in the cytoplasm. The catalysed reaction is AMP + diphosphate = 5-phospho-alpha-D-ribose 1-diphosphate + adenine. It functions in the pathway purine metabolism; AMP biosynthesis via salvage pathway; AMP from adenine: step 1/1. Catalyzes a salvage reaction resulting in the formation of AMP, that is energically less costly than de novo synthesis. The sequence is that of Adenine phosphoribosyltransferase from Lachnoclostridium phytofermentans (strain ATCC 700394 / DSM 18823 / ISDg) (Clostridium phytofermentans).